A 259-amino-acid chain; its full sequence is MLIIPAIDLREGNCVRLVEGRLDRETVYSGDPVAVAGMWQSQGARMLHVVDLDGAFSGAPKNLDVIGEILSAVSIPVQVGGGIRSMEAVERLLELGAARVILGTAAILKPQLVAEACARYGEAVLVGIDGRNGRVAIEGWGVTVDKGTVELALEMKRLGIKRAVFTDIRRDGTLRGPNLEAIREFAAATGLKVIASGGVSNAEDLRALKKLEPLGVEAVIMGKALYAGTVKMSEALAIASGEEAEEGACCKKESSPAWT.

The active-site Proton acceptor is the Asp-8. The active-site Proton donor is the Asp-129.

It belongs to the HisA/HisF family.

It localises to the cytoplasm. It catalyses the reaction 1-(5-phospho-beta-D-ribosyl)-5-[(5-phospho-beta-D-ribosylamino)methylideneamino]imidazole-4-carboxamide = 5-[(5-phospho-1-deoxy-D-ribulos-1-ylimino)methylamino]-1-(5-phospho-beta-D-ribosyl)imidazole-4-carboxamide. Its pathway is amino-acid biosynthesis; L-histidine biosynthesis; L-histidine from 5-phospho-alpha-D-ribose 1-diphosphate: step 4/9. In Pelotomaculum thermopropionicum (strain DSM 13744 / JCM 10971 / SI), this protein is 1-(5-phosphoribosyl)-5-[(5-phosphoribosylamino)methylideneamino] imidazole-4-carboxamide isomerase.